A 413-amino-acid polypeptide reads, in one-letter code: Palmitoyltransferase ZDHHC6 (413 aa).

The Cytoplasmic portion of the chain corresponds to Met-1–Pro-24. Residues Ile-25–Trp-45 traverse the membrane as a helical segment. Over Tyr-46–Asn-57 the chain is Lumenal. Residues Phe-58–Val-78 form a helical membrane-spanning segment. The Cytoplasmic segment spans residues Gly-79–Ser-143. Residues Gln-99–Leu-149 enclose the DHHC domain. The active-site S-palmitoyl cysteine intermediate is Cys-129. The chain crosses the membrane as a helical span at residues Phe-144–Met-164. Residues Thr-165–Thr-205 are Lumenal-facing. A helical membrane pass occupies residues Thr-206–Ile-226. The Cytoplasmic segment spans residues Gln-227–Arg-413. Residues Val-313–Cys-398 form the SH3 domain. 3 S-palmitoyl cysteine lipidation sites follow: Cys-328, Cys-329, and Cys-343. The short motif at Lys-410 to Arg-413 is the Di-lysine motif element.

Belongs to the DHHC palmitoyltransferase family. Homooligomerizes. Interacts with SELENOK. In terms of processing, palmitoylated at 3 different sites by ZDHHC16. The combination of the different palmitoylation events strongly affects the quaternary assembly of ZDHHC6, its localization, stability and function. Palmitoylation at Cys-328 accelerates the turnover of ZDHHC6. Depalmitoylated by LYPLA2.

It is found in the endoplasmic reticulum membrane. It carries out the reaction L-cysteinyl-[protein] + hexadecanoyl-CoA = S-hexadecanoyl-L-cysteinyl-[protein] + CoA. It catalyses the reaction L-cysteinyl-[protein] + octadecanoyl-CoA = S-octadecanoyl-L-cysteinyl-[protein] + CoA. Endoplasmic reticulum palmitoyl acyltransferase that mediates palmitoylation of proteins such as AMFR, CALX, ITPR1 and TFRC. Palmitoylates calnexin (CALX), which is required for its association with the ribosome-translocon complex and efficient folding of glycosylated proteins. Mediates palmitoylation of AMFR, promoting AMFR distribution to the peripheral endoplasmic reticulum. Together with SELENOK, palmitoylates ITPR1 in immune cells, leading to regulate ITPR1 stability and function. Stearoyltransferase that mediates stearoylation of TFRC to inhibit TFRC-mediated activation of the JNK pathway and mitochondrial fragmentation. This Homo sapiens (Human) protein is Palmitoyltransferase ZDHHC6.